We begin with the raw amino-acid sequence, 263 residues long: Small ribosomal subunit protein uS2 (263 aa).

Residues 223-249 show a composition bias toward basic and acidic residues; the sequence is KALREQDGEALANEEKEITDEEKKEVL. A disordered region spans residues 223–263; the sequence is KALREQDGEALANEEKEITDEEKKEVLDEAMSEEDFGEEQE. The segment covering 250-263 has biased composition (acidic residues); that stretch reads DEAMSEEDFGEEQE.

This sequence belongs to the universal ribosomal protein uS2 family.

The chain is Small ribosomal subunit protein uS2 from Campylobacter jejuni subsp. jejuni serotype O:6 (strain 81116 / NCTC 11828).